The primary structure comprises 319 residues: Large ribosomal subunit protein uL10 (319 aa).

Positions Ala286–Ala295 are enriched in low complexity. Residues Ala286–Asp319 are disordered.

It belongs to the universal ribosomal protein uL10 family. In terms of assembly, P0 forms a pentameric complex by interaction with dimers of P1 and P2. Interacts with NSF. In terms of processing, phosphorylated. Highly expressed in stems, inflorescences and immature seeds (at protein level). Expressed in leaves and mature seeds (at protein level).

Ribosomal protein P0 is the functional equivalent of E.coli protein L10. This Oryza sativa subsp. japonica (Rice) protein is Large ribosomal subunit protein uL10.